Reading from the N-terminus, the 258-residue chain is Undecaprenyl-diphosphatase (258 aa).

Helical transmembrane passes span 1-21 (MDFLNAVILGIVEGLTEFLPV), 42-62 (LKCFEVVIQLGSILAVVFMFF), 69-89 (FNLWIKLAIGFVPTAIIGFLA), 96-116 (FFEPSTVAYMLIIGGIVFIVV), 135-155 (VSFKQAFIIGLSQCFAMIPGT), 173-193 (EVAARFSFLLAIPTMFAATAY), 211-231 (IFLVGGFMAFIVALIVIKLFL), and 237-257 (FSYISFGIYRIILGSIFLIYI).

Belongs to the UppP family.

The protein resides in the cell inner membrane. The enzyme catalyses di-trans,octa-cis-undecaprenyl diphosphate + H2O = di-trans,octa-cis-undecaprenyl phosphate + phosphate + H(+). Catalyzes the dephosphorylation of undecaprenyl diphosphate (UPP). Confers resistance to bacitracin. In Campylobacter fetus subsp. fetus (strain 82-40), this protein is Undecaprenyl-diphosphatase.